The chain runs to 126 residues: Large ribosomal subunit protein bL12 (126 aa).

The protein belongs to the bacterial ribosomal protein bL12 family. As to quaternary structure, homodimer. Part of the ribosomal stalk of the 50S ribosomal subunit. Forms a multimeric L10(L12)X complex, where L10 forms an elongated spine to which 2 to 4 L12 dimers bind in a sequential fashion. Binds GTP-bound translation factors.

In terms of biological role, forms part of the ribosomal stalk which helps the ribosome interact with GTP-bound translation factors. Is thus essential for accurate translation. This chain is Large ribosomal subunit protein bL12, found in Coxiella burnetii (strain CbuK_Q154) (Coxiella burnetii (strain Q154)).